Consider the following 333-residue polypeptide: N-acetyl-gamma-glutamyl-phosphate reductase (333 aa).

C145 is a catalytic residue.

The protein belongs to the NAGSA dehydrogenase family. Type 1 subfamily.

It localises to the cytoplasm. It carries out the reaction N-acetyl-L-glutamate 5-semialdehyde + phosphate + NADP(+) = N-acetyl-L-glutamyl 5-phosphate + NADPH + H(+). It participates in amino-acid biosynthesis; L-arginine biosynthesis; N(2)-acetyl-L-ornithine from L-glutamate: step 3/4. Functionally, catalyzes the NADPH-dependent reduction of N-acetyl-5-glutamyl phosphate to yield N-acetyl-L-glutamate 5-semialdehyde. This Salinispora arenicola (strain CNS-205) protein is N-acetyl-gamma-glutamyl-phosphate reductase.